Consider the following 293-residue polypeptide: MATNESVSIFSSASLAVEYVDSLLPENPLQEPFKNAWNYMLNNYTKFQIATWGSLIVHEALYFLFCLPGFLFQFIPYMKKYKIQKDKPETWENQWKCFKVLLFNHFCIQLPLICGTYYFTEYFNIPYDWERMPRWYFLLARCFGCAVIEDTWHYFLHRLLHHKRIYKYIHKVHHEFQAPFGMEAEYAHPLETLILGTGFFIGIVLLCDHVILLWAWVTIRLLETIDVHSGYDIPLNPLNLIPFYAGSRHHDFHHMNFIGNYASTFTWWDRIFGTDSQYNAYNEKRKKFEKKTE.

2 helical membrane passes run 55-75 (LIVH…FQFI) and 100-120 (VLLF…YYFT). One can recognise a Fatty acid hydroxylase domain in the interval 145 to 274 (CAVIEDTWHY…FTWWDRIFGT (130 aa)). The Histidine box-1 motif lies at 157–161 (HRLLH). The Histidine box-2 motif lies at 170-174 (HKVHH). The chain crosses the membrane as a helical span at residues 199-219 (FFIGIVLLCDHVILLWAWVTI). The Histidine box-3 motif lies at 249-255 (HHDFHHM).

Belongs to the sterol desaturase family. The cofactor is Fe cation. Post-translationally, ubiquitinated by MARCHF6, leading to proteasomal degradation.

Its subcellular location is the endoplasmic reticulum membrane. The enzyme catalyses 4,4-dimethyl-5alpha-cholest-7-en-3beta-ol + 6 Fe(II)-[cytochrome b5] + 3 O2 + 5 H(+) = 4alpha-carboxy-4beta-methyl-5alpha-cholest-7-ene-3beta-ol + 6 Fe(III)-[cytochrome b5] + 4 H2O. It catalyses the reaction 4,4-dimethyl-5alpha-cholesta-8,24-dien-3beta-ol + 6 Fe(II)-[cytochrome b5] + 3 O2 + 5 H(+) = 4beta-methylzymosterol-4alpha-carboxylate + 6 Fe(III)-[cytochrome b5] + 4 H2O. The catalysed reaction is 4alpha-methylzymosterol + 6 Fe(II)-[cytochrome b5] + 3 O2 + 5 H(+) = 4alpha-carboxyzymosterol + 6 Fe(III)-[cytochrome b5] + 4 H2O. It carries out the reaction 4alpha-methyl-5alpha-cholest-7-en-3beta-ol + 6 Fe(II)-[cytochrome b5] + 3 O2 + 5 H(+) = 4alpha-carboxy-5alpha-cholest-7-en-3beta-ol + 6 Fe(III)-[cytochrome b5] + 4 H2O. The enzyme catalyses 4,4-dimethyl-5alpha-cholest-8-en-3beta-ol + 6 Fe(II)-[cytochrome b5] + 3 O2 + 5 H(+) = 4alpha-carboxy-4beta-methyl-5alpha-cholest-8-en-3beta-ol + 6 Fe(III)-[cytochrome b5] + 4 H2O. It catalyses the reaction 4alpha-methyl-5alpha-cholest-8-en-3beta-ol + 6 Fe(II)-[cytochrome b5] + 3 O2 + 5 H(+) = 4alpha-carboxy-5alpha-cholest-8-ene-3beta-ol + 6 Fe(III)-[cytochrome b5] + 4 H2O. It functions in the pathway steroid biosynthesis; zymosterol biosynthesis; zymosterol from lanosterol: step 3/6. Its pathway is steroid biosynthesis; cholesterol biosynthesis. In terms of biological role, catalyzes the three-step monooxygenation required for the demethylation of 4,4-dimethyl and 4alpha-methylsterols, which can be subsequently metabolized to cholesterol. This is Methylsterol monooxygenase 1 (MSMO1) from Pongo abelii (Sumatran orangutan).